The following is a 156-amino-acid chain: Small ribosomal subunit protein uS7c (156 aa).

Belongs to the universal ribosomal protein uS7 family. In terms of assembly, part of the 30S ribosomal subunit.

The protein localises to the plastid. Its subcellular location is the chloroplast. One of the primary rRNA binding proteins, it binds directly to 16S rRNA where it nucleates assembly of the head domain of the 30S subunit. This is Small ribosomal subunit protein uS7c (rps7) from Bowenia serrulata (Byfield fern).